We begin with the raw amino-acid sequence, 307 residues long: GTPase Era (307 aa).

The Era-type G domain occupies 7–181 (RCGWVALLGP…VKLVKSKLPV (175 aa)). A G1 region spans residues 15 to 22 (GPPNAGKS). 15-22 (GPPNAGKS) contributes to the GTP binding site. The G2 stretch occupies residues 41 to 45 (QTTRN). The G3 stretch occupies residues 62 to 65 (DTPG). Residues 62-66 (DTPGI) and 130-133 (NKVD) each bind GTP. The segment at 130–133 (NKVD) is G4. The segment at 160–162 (VSA) is G5. One can recognise a KH type-2 domain in the interval 212–290 (LRQELPYSVA…HLELWVKVRE (79 aa)).

This sequence belongs to the TRAFAC class TrmE-Era-EngA-EngB-Septin-like GTPase superfamily. Era GTPase family. Monomer.

It is found in the cytoplasm. The protein localises to the cell inner membrane. Functionally, an essential GTPase that binds both GDP and GTP, with rapid nucleotide exchange. Plays a role in 16S rRNA processing and 30S ribosomal subunit biogenesis and possibly also in cell cycle regulation and energy metabolism. This is GTPase Era from Nitratidesulfovibrio vulgaris (strain DSM 19637 / Miyazaki F) (Desulfovibrio vulgaris).